The following is a 360-amino-acid chain: sn-glycerol-3-phosphate import ATP-binding protein UgpC (360 aa).

The ABC transporter domain occupies L4 to I235. Residue G37 to S44 participates in ATP binding.

Belongs to the ABC transporter superfamily. sn-glycerol-3-phosphate importer (TC 3.A.1.1.3) family. As to quaternary structure, the complex is composed of two ATP-binding proteins (UgpC), two transmembrane proteins (UgpA and UgpE) and a solute-binding protein (UgpB).

Its subcellular location is the cell inner membrane. The enzyme catalyses sn-glycerol 3-phosphate(out) + ATP + H2O = sn-glycerol 3-phosphate(in) + ADP + phosphate + H(+). Its function is as follows. Part of the ABC transporter complex UgpBAEC involved in sn-glycerol-3-phosphate (G3P) import. Responsible for energy coupling to the transport system. The polypeptide is sn-glycerol-3-phosphate import ATP-binding protein UgpC (Burkholderia pseudomallei (strain 1710b)).